An 899-amino-acid chain; its full sequence is AP-3 complex subunit delta (899 aa).

12 HEAT repeats span residues 37 to 74, 155 to 192, 194 to 229, 231 to 267, 268 to 305, 308 to 344, 345 to 382, 384 to 428, 480 to 518, 536 to 580, 590 to 613, and 614 to 656; these read QSPE…KLTY, ELAR…QYPE, LRDN…HNPQ, FIQL…IEPK, LRVK…LNSD, DSAV…KINT, DFIA…EDNL, DFVQ…ITAM, RTLA…LLDN, ELQQ…LIIS, SEAL…SLPL, and LLTE…TESE. 4 disordered regions span residues 668 to 701, 741 to 768, 782 to 801, and 849 to 899; these read DGIV…PTHE, NLSN…KKKK, GVNT…SARN, and AAEE…LTTE. Over residues 743 to 759 the composition is skewed to low complexity; it reads SNSKPSSSGSLVRLSSE. Residues 841 to 862 adopt a coiled-coil conformation; that stretch reads QRLLDESAAAEEEVVVVKKKKR. The segment covering 857 to 880 has biased composition (basic residues); it reads VKKKKRSKDGSKSSKKKSRSKSKP.

Belongs to the adaptor complexes large subunit family. In terms of assembly, adaptor protein complex 3 (AP-3) is a heterotetramer composed of 2 large adaptins (APL5 and APL6), a medium adaptin (APM3) and a small adaptin (APS3).

It is found in the golgi apparatus. It localises to the cytoplasmic vesicle. Its subcellular location is the clathrin-coated vesicle membrane. Part of the AP-3 complex, an adaptor-related complex which is not clathrin-associated. The complex is associated with the Golgi region as well as more peripheral structures. It facilitates the budding of vesicles from the Golgi membrane and may be directly involved in trafficking to the vacuole. In Eremothecium gossypii (strain ATCC 10895 / CBS 109.51 / FGSC 9923 / NRRL Y-1056) (Yeast), this protein is AP-3 complex subunit delta (APL5).